Consider the following 386-residue polypeptide: Tryptophan--tRNA ligase (386 aa).

Residues 82–90 (PSGPMHIGH) carry the 'HIGH' region motif. A 'KMSKS' region motif is present at residues 253–257 (KMSAS).

It belongs to the class-I aminoacyl-tRNA synthetase family.

The protein localises to the cytoplasm. The catalysed reaction is tRNA(Trp) + L-tryptophan + ATP = L-tryptophyl-tRNA(Trp) + AMP + diphosphate + H(+). The polypeptide is Tryptophan--tRNA ligase (Pyrococcus horikoshii (strain ATCC 700860 / DSM 12428 / JCM 9974 / NBRC 100139 / OT-3)).